A 461-amino-acid polypeptide reads, in one-letter code: Kynurenine 3-monooxygenase (461 aa).

FAD is bound by residues 17-18 (LA), 37-39 (ERR), and Ala56. L-kynurenine contacts are provided by Arg84 and Tyr98. Residues Arg111, Leu135, Asp311, and 324–325 (MN) each bind FAD. Positions 369 and 404 each coordinate L-kynurenine.

It belongs to the aromatic-ring hydroxylase family. KMO subfamily. FAD serves as cofactor.

The catalysed reaction is L-kynurenine + NADPH + O2 + H(+) = 3-hydroxy-L-kynurenine + NADP(+) + H2O. Its pathway is cofactor biosynthesis; NAD(+) biosynthesis; quinolinate from L-kynurenine: step 1/3. It participates in siderophore biosynthesis; quinolobactin biosynthesis. In terms of biological role, catalyzes the hydroxylation of L-kynurenine (L-Kyn) to form 3-hydroxy-L-kynurenine (L-3OHKyn). Probably required for the synthesis of quinolinic acid and the siderophore quinolobactin. This is Kynurenine 3-monooxygenase from Pseudomonas fluorescens.